The primary structure comprises 376 residues: MHCAQYTAGRCRSCQWLDKPYPQQLADKQHHLESLLAGHAVTQWLAPVFGRESTFRNKAKMVVSGSVERPLLGMLHRDGTPVDLCACPLYPPSFEPVFTVLKTFIARAGLTPYNVARKRGELKFLLLTESTYNGELMLRFVLRSETKLAQLIAALPWLQQQLPQLAVISANIQPVHMAILEGEREIPLTEQQALPERFNQVPLYIRPQSFFQTNPPVAASLYATARQWVQEHEVHSMWDLFCGVGGFGLHCAGPETQLTGIEISAEAIACARQSAEQLGLKNVSFAALDSTRFATAEAQIPELVLVNPPRRGIGRELCDYLSQMAPKFILYSSCNAETMAKDISLLAGYHIERVQLFDMFPHTSHYEVLTLLALRR.

4 residues coordinate [4Fe-4S] cluster: Cys3, Cys11, Cys14, and Cys87. S-adenosyl-L-methionine-binding residues include Gln212, Phe241, Glu262, and Asn307. Cys334 (nucleophile) is an active-site residue.

It belongs to the class I-like SAM-binding methyltransferase superfamily. RNA M5U methyltransferase family. RlmC subfamily.

It catalyses the reaction uridine(747) in 23S rRNA + S-adenosyl-L-methionine = 5-methyluridine(747) in 23S rRNA + S-adenosyl-L-homocysteine + H(+). Catalyzes the formation of 5-methyl-uridine at position 747 (m5U747) in 23S rRNA. The protein is 23S rRNA (uracil(747)-C(5))-methyltransferase RlmC of Yersinia pseudotuberculosis serotype I (strain IP32953).